The primary structure comprises 459 residues: tRNA modification GTPase MnmE (459 aa).

(6S)-5-formyl-5,6,7,8-tetrahydrofolate contacts are provided by Arg-22, Glu-85, and Arg-124. A TrmE-type G domain is found at 221-380 (GLSTVIVGKP…LELQIRDLFF (160 aa)). Asn-231 contacts K(+). Residues 231 to 236 (NVGKSS), 250 to 256 (TEVAGTT), and 275 to 278 (DTAG) each bind GTP. Ser-235 provides a ligand contact to Mg(2+). K(+) is bound by residues Thr-250, Val-252, and Thr-255. Position 256 (Thr-256) interacts with Mg(2+). Residue Lys-459 coordinates (6S)-5-formyl-5,6,7,8-tetrahydrofolate.

This sequence belongs to the TRAFAC class TrmE-Era-EngA-EngB-Septin-like GTPase superfamily. TrmE GTPase family. In terms of assembly, homodimer. Heterotetramer of two MnmE and two MnmG subunits. K(+) serves as cofactor.

It is found in the cytoplasm. Exhibits a very high intrinsic GTPase hydrolysis rate. Involved in the addition of a carboxymethylaminomethyl (cmnm) group at the wobble position (U34) of certain tRNAs, forming tRNA-cmnm(5)s(2)U34. The polypeptide is tRNA modification GTPase MnmE (Staphylococcus haemolyticus (strain JCSC1435)).